Consider the following 447-residue polypeptide: Multicopper oxidase mco (447 aa).

Basic and acidic residues predominate over residues 1 to 25 (MMNMKEDKKNTMDMTNMKHHDERKK). Residues 1–29 (MMNMKEDKKNTMDMTNMKHHDERKKLNSS) form a disordered region. Residues H107, H109, H147, H149, H375, H378, H380, H428, C429, H430, H434, and M439 each contribute to the Cu cation site.

Belongs to the multicopper oxidase family. Requires Cu cation as cofactor.

Its subcellular location is the cytoplasm. In terms of biological role, may be involved in copper homeostasis and oxidative stress response. The chain is Multicopper oxidase mco (mco) from Staphylococcus haemolyticus (strain JCSC1435).